The chain runs to 376 residues: Inactive CLIP domain-containing serine protease A28 (376 aa).

Positions 1 to 19 (MKVLLFCIVISLTTLIASG) are cleaved as a signal peptide. Positions 24–80 (EELRCPGGYCVSKYLCPNGTFIDDIKHAQTTQLIGLRAGLDIDDFDDCNDYLLVCCQ) constitute a Clip domain. 3 cysteine pairs are disulfide-bonded: cysteine 28/cysteine 78, cysteine 33/cysteine 71, and cysteine 39/cysteine 79. The N-linked (GlcNAc...) asparagine glycan is linked to asparagine 41. Residues 85–106 (PTATSTEKPATSDELIEPPPST) form a disordered region. A Peptidase S1 domain is found at 114 to 364 (NEGGLIYDLR…YVQWLNEHIV (251 aa)). N-linked (GlcNAc...) asparagine glycosylation is found at asparagine 125 and asparagine 279. 3 cysteine pairs are disulfide-bonded: cysteine 251–cysteine 321, cysteine 280–cysteine 301, and cysteine 311–cysteine 340. N-linked (GlcNAc...) asparagine glycosylation occurs at asparagine 369.

It belongs to the peptidase S1 family. CLIP subfamily. May form a heterodimer of a light chain and a heavy chain; disulfide-linked. Post-translationally, secreted as a full-length protein. Proteolytically cleaved into two chains which probably remain covalently linked. Cleavage is induced by fungus B.bassiana and Gram-positive or Gram-negative bacteria infection.

It localises to the secreted. Functionally, inactive serine protease which plays an essential role in the innate immune response against bacteria, fungi and protozoa infection by activating the melanization cascade. In the melanization cascade, acts downstream of TEP1, SPCLIP1 and CLIPA8 to promote CLIPC9 proteolytic cleavage. In the susceptible strain G3, appears to be dispensable for parasite P.berghei ookinete elimination which occurs by lysis. Required for the melanization of Gram-positive and Gram-negative bacteria. Required for the melanization of fungus B.bassiana. The sequence is that of Inactive CLIP domain-containing serine protease A28 from Anopheles gambiae (African malaria mosquito).